A 324-amino-acid chain; its full sequence is Heparan sulfate 2-O-sulfotransferase hst-2 (324 aa).

At 1–6 the chain is on the cytoplasmic side; the sequence is MLWKKR. The chain crosses the membrane as a helical; Signal-anchor for type II membrane protein span at residues 7–24; the sequence is KVLYFAGISVFILILLLL. At 25 to 324 the chain is on the lumenal side; sequence KLNSKPKANV…QYHFEKIKPS (300 aa). N-linked (GlcNAc...) asparagine glycans are attached at residues asparagine 75 and asparagine 94. Active-site residues include histidine 107 and histidine 109. N-linked (GlcNAc...) asparagine glycosylation occurs at asparagine 161. 2 cysteine pairs are disulfide-bonded: cysteine 167/cysteine 175 and cysteine 188/cysteine 194.

Belongs to the sulfotransferase 3 family. Homotrimer. As to expression, present in the hypodermis, muscle, distal tip cells (DTCs) and in neurons (at protein level).

The protein localises to the golgi apparatus membrane. Functionally, catalyzes the transfer of sulfate to the C2-position of selected hexuronic acid residues within the maturing heparan sulfate (HS). Involved in cell adhesion and guidance by specifically modifying proteoglycans in the extracellular matrix and on the cell surface that are essential for axon migrations. This is Heparan sulfate 2-O-sulfotransferase hst-2 from Caenorhabditis elegans.